A 227-amino-acid polypeptide reads, in one-letter code: Glutathione S-transferase U17 (227 aa).

The GST N-terminal domain occupies 4–83; sequence SDVKLIGAWA…YIDDTWSSSG (80 aa). Residues 14–15, 40–41, 54–55, and 67–68 contribute to the glutathione site; these read SP, SK, KI, and ES. The region spanning 90-222 is the GST C-terminal domain; it reads DPYDRAMARF…KLAEFAKKIF (133 aa).

This sequence belongs to the GST superfamily. Tau family.

It is found in the cytoplasm. The protein localises to the cytosol. It catalyses the reaction RX + glutathione = an S-substituted glutathione + a halide anion + H(+). Functionally, involved in light signaling, mainly phyA-mediated photomorphogenesis and in the integration of various phytohormone signals to modulate various aspects of plant development by affecting glutathione pools. In vitro, possesses glutathione S-transferase activity toward 1-chloro-2,4-dinitrobenzene (CDNB) and benzyl isothiocyanate (BITC). This chain is Glutathione S-transferase U17 (GSTU17), found in Arabidopsis thaliana (Mouse-ear cress).